The sequence spans 281 residues: 18S rRNA (guanine-N(7))-methyltransferase (281 aa).

A disordered region spans residues 256–281 (KARRRRQGKEVCPDTQYTGRKRKPRF).

Belongs to the class I-like SAM-binding methyltransferase superfamily. BUD23/WBSCR22 family. In terms of assembly, heterodimer with TRMT112; this heterodimerization is necessary for the metabolic stability and activity of the catalytic subunit BUD23. Interacts with GRIP1. Post-translationally, may be ubiquitinated and targeted to degradation in response to pro-inflammatory cytokine signaling.

It is found in the nucleus. It localises to the nucleoplasm. Its subcellular location is the cytoplasm. The protein resides in the perinuclear region. It catalyses the reaction a guanosine in 18S rRNA + S-adenosyl-L-methionine = an N(7)-methylguanosine in 18S rRNA + S-adenosyl-L-homocysteine. Its function is as follows. S-adenosyl-L-methionine-dependent methyltransferase that specifically methylates the N(7) position of a guanine in 18S rRNA. Requires the methyltransferase adapter protein TRM112 for full rRNA methyltransferase activity. Involved in the pre-rRNA processing steps leading to small-subunit rRNA production independently of its RNA-modifying catalytic activity. Important for biogenesis end export of the 40S ribosomal subunit independent on its methyltransferase activity. Locus-specific steroid receptor coactivator. Potentiates transactivation by glucocorticoid (NR3C1), mineralocorticoid (NR3C2), androgen (AR) and progesterone (PGR) receptors. Required for the maintenance of open chromatin at the TSC22D3/GILZ locus to facilitate NR3C1 loading on the response elements. Required for maintenance of dimethylation on histone H3 'Lys-79' (H3K79me2), although direct histone methyltransferase activity is not observed in vitro. The sequence is that of 18S rRNA (guanine-N(7))-methyltransferase from Bos taurus (Bovine).